We begin with the raw amino-acid sequence, 371 residues long: Protein OSB2, chloroplastic (371 aa).

The N-terminal 20 residues, 1–20, are a transit peptide targeting the chloroplast; that stretch reads MSLISKSLARIECSPFFYPR. The disordered stretch occupies residues 45–64; that stretch reads GKTGNGERKQRAKAPAKTPE. The region spanning 97-195 is the SSB domain; the sequence is VANWVNLIGF…VLVQNLNFIQ (99 aa). PDF region stretches follow at residues 237–289 and 312–360; these read WNHL…PKLE and WKDL…PKLP.

As to expression, expressed in the floral abscission zone.

The protein resides in the plastid. The protein localises to the chloroplast. Its function is as follows. Binds preferentially single-stranded DNA. Does not bind to RNA. This chain is Protein OSB2, chloroplastic (OSB2), found in Arabidopsis thaliana (Mouse-ear cress).